We begin with the raw amino-acid sequence, 437 residues long: Eukaryotic peptide chain release factor subunit 1 (437 aa).

The protein belongs to the eukaryotic release factor 1 family. Heterodimer of two subunits, one of which binds GTP.

It is found in the cytoplasm. Its function is as follows. Directs the termination of nascent peptide synthesis (translation) in response to the termination codons UAA and possibly also UAG and UGA. In Didinium nasutum, this protein is Eukaryotic peptide chain release factor subunit 1 (eRF1).